Here is a 224-residue protein sequence, read N- to C-terminus: LexA repressor (224 aa).

A DNA-binding region (H-T-H motif) is located at residues R31 to Q51. Residues S142 and K179 each act as for autocatalytic cleavage activity in the active site.

This sequence belongs to the peptidase S24 family. In terms of assembly, homodimer.

It catalyses the reaction Hydrolysis of Ala-|-Gly bond in repressor LexA.. Functionally, represses a number of genes involved in the response to DNA damage (SOS response), including recA and lexA. In the presence of single-stranded DNA, RecA interacts with LexA causing an autocatalytic cleavage which disrupts the DNA-binding part of LexA, leading to derepression of the SOS regulon and eventually DNA repair. In Acidovorax ebreus (strain TPSY) (Diaphorobacter sp. (strain TPSY)), this protein is LexA repressor.